Consider the following 28-residue polypeptide: Heat shock protein 81 (28 aa).

N5 and D21 together coordinate ATP.

Belongs to the heat shock protein 90 family. As to quaternary structure, homodimer.

Its subcellular location is the cytoplasm. Functionally, putative molecular chaperone that may promote the maturation, structural maintenance and proper regulation of specific target proteins. This Pseudotsuga menziesii (Douglas-fir) protein is Heat shock protein 81.